The chain runs to 337 residues: Vacuolar protein sorting-associated protein 26B (337 aa).

The segment at 311 to 337 (SQRFEGTSHPETRPQHSGAAAVEQEQE) is disordered.

The protein belongs to the VPS26 family. Component of the heterotrimeric retromer cargo-selective complex (CSC) which is believed to associate with variable sorting nexins to form functionally distinct retromer complex variants.

Its subcellular location is the cytoplasm. The protein resides in the membrane. The protein localises to the endosome. Functionally, acts as a component of the retromer cargo-selective complex (CSC). The CSC is believed to be the core functional component of retromer or respective retromer complex variants acting to prevent missorting of selected transmembrane cargo proteins into the lysosomal degradation pathway. Retromer mediates retrograde transport of cargo proteins from endosomes to the trans-Golgi network (TGN). This Xenopus tropicalis (Western clawed frog) protein is Vacuolar protein sorting-associated protein 26B (vps26b).